A 319-amino-acid chain; its full sequence is MARVVFRDARIYLIQWLTKIRHTLNQRQSLNTDKEHLRKIVRGMFWLMLLIISAKVAHSLWRYFSFSAEYTAVSPSANKPPRADAKTFDKNDVQLISQQNWFGKYQPVATPVKQPEPASVAETRLNVVLRGIAFGARPGAVIEEGGKQQVYLQGERLDSHNAVIEEINRDHVMLRYQGKIERLSLAEEGHSTVAVTNKKAVSDEAKQAVAEPAASAPVEIPTAVRQALTKDPQKIFNYIQLTPVRKEGIVGYAVKPGADRSLFDASGFKEGDIAIALNQQDFTDPRAMIALMRQLPSMDSIQLTVLRKGARHDISIALR.

The Cytoplasmic segment spans residues 1 to 42; sequence MARVVFRDARIYLIQWLTKIRHTLNQRQSLNTDKEHLRKIVR. Residues 43-65 form a helical membrane-spanning segment; it reads GMFWLMLLIISAKVAHSLWRYFS. Residues 66 to 319 are Periplasmic-facing; it reads FSAEYTAVSP…ARHDISIALR (254 aa).

This sequence belongs to the GSP C family. As to quaternary structure, interacts with outer cell membrane protein GspD2 in the periplasm.

The protein localises to the cell inner membrane. Its function is as follows. Involved in a type II secretion system (T2SS, formerly general secretion pathway, GSP) for the export of folded proteins across the outer membrane. This Escherichia coli O78:H11 (strain H10407 / ETEC) protein is Type II secretion system protein C 2 (gspC2).